The primary structure comprises 215 residues: MNNLFVLIKREFILQHRINNIIKYIVIFFLFYIISTVLINSEKDINKFGLIFSVICLLISLISFSTIIFKSDVEDGSLELLLSIVSCEKIIFAKFVAIFICTTVGLIFVLPVIYVFFDQILLEIALFFISVWMIFVLSSSLVVLSGSVQCYFKKNTNFVGTFIMPLLIPNIIMTGLILQDNNLQLIFIMIGINLIFLPVSFCLSAYLIKNIYNIT.

The next 6 helical transmembrane spans lie at 21 to 40 (IIKY…VLIN), 50 to 69 (LIFS…TIIF), 95 to 117 (FVAI…YVFF), 122 to 144 (LEIA…LVVL), 157 to 179 (NFVG…LILQ), and 185 to 207 (LIFI…SAYL).

This sequence belongs to the CcmB/CycW/HelB family.

The protein resides in the cell membrane. This is an uncharacterized protein from Rickettsia prowazekii (strain Madrid E).